The chain runs to 436 residues: Protein arginine methyltransferase NDUFAF7, mitochondrial (436 aa).

A mitochondrion-targeting transit peptide spans 1-41; it reads MNALVRRCVARAGLPCIWRGKCYSSGNEPAESNQVTPMLRH. Residues 411-436 form a disordered region; it reads GSQERNACQSKTPSSSVAGFDELVWQ. Residues 413–427 show a composition bias toward polar residues; that stretch reads QERNACQSKTPSSSV.

This sequence belongs to the NDUFAF7 family. Interacts with NDUFS2.

The protein localises to the mitochondrion. It catalyses the reaction L-arginyl-[protein] + 2 S-adenosyl-L-methionine = N(omega),N(omega)'-dimethyl-L-arginyl-[protein] + 2 S-adenosyl-L-homocysteine + 2 H(+). Its function is as follows. Arginine methyltransferase involved in the assembly or stability of mitochondrial NADH:ubiquinone oxidoreductase complex (complex I). Acts by mediating symmetric dimethylation of 'Arg-118' of NDUFS2 after it assembles into the complex I, stabilizing the early intermediate complex. This Mus musculus (Mouse) protein is Protein arginine methyltransferase NDUFAF7, mitochondrial.